A 185-amino-acid polypeptide reads, in one-letter code: Peptidyl-tRNA hydrolase (185 aa).

Position 14 (tyrosine 14) interacts with tRNA. Histidine 19 serves as the catalytic Proton acceptor. Residues phenylalanine 64, asparagine 66, and asparagine 112 each coordinate tRNA.

It belongs to the PTH family. In terms of assembly, monomer.

The protein resides in the cytoplasm. It catalyses the reaction an N-acyl-L-alpha-aminoacyl-tRNA + H2O = an N-acyl-L-amino acid + a tRNA + H(+). Hydrolyzes ribosome-free peptidyl-tRNAs (with 1 or more amino acids incorporated), which drop off the ribosome during protein synthesis, or as a result of ribosome stalling. In terms of biological role, catalyzes the release of premature peptidyl moieties from peptidyl-tRNA molecules trapped in stalled 50S ribosomal subunits, and thus maintains levels of free tRNAs and 50S ribosomes. The protein is Peptidyl-tRNA hydrolase of Halalkalibacterium halodurans (strain ATCC BAA-125 / DSM 18197 / FERM 7344 / JCM 9153 / C-125) (Bacillus halodurans).